A 160-amino-acid polypeptide reads, in one-letter code: Ribosome maturation factor RimP (160 aa).

It belongs to the RimP family.

It is found in the cytoplasm. In terms of biological role, required for maturation of 30S ribosomal subunits. In Orientia tsutsugamushi (strain Ikeda) (Rickettsia tsutsugamushi), this protein is Ribosome maturation factor RimP.